The sequence spans 325 residues: Lactonase drp35 (325 aa).

The Ca(2+) site is built by Glu46, Thr108, Gly110, Asp128, Thr131, Tyr133, Asp136, Asn183, Asp234, and Ser235. Asp234 functions as the Proton donor in the catalytic mechanism.

It belongs to the SMP-30/CGR1 family. It depends on Ca(2+) as a cofactor.

The protein resides in the cytoplasm. Functionally, exhibits lactonase activity. Acts in cells with perturbed membrane integrity and is possibly related to the membrane homeostasis. In Staphylococcus epidermidis (strain ATCC 12228 / FDA PCI 1200), this protein is Lactonase drp35 (drp35).